Consider the following 321-residue polypeptide: Ribosomal RNA small subunit methyltransferase H (321 aa).

S-adenosyl-L-methionine contacts are provided by residues Gly40–His42, Asp60, Phe84, Asp106, and Gln113.

Belongs to the methyltransferase superfamily. RsmH family.

It is found in the cytoplasm. It carries out the reaction cytidine(1402) in 16S rRNA + S-adenosyl-L-methionine = N(4)-methylcytidine(1402) in 16S rRNA + S-adenosyl-L-homocysteine + H(+). Specifically methylates the N4 position of cytidine in position 1402 (C1402) of 16S rRNA. This chain is Ribosomal RNA small subunit methyltransferase H, found in Pasteurella multocida (strain Pm70).